We begin with the raw amino-acid sequence, 446 residues long: 5-hydroxytryptamine receptor (446 aa).

Residues Met-1–Ala-65 are Extracellular-facing. Asn-23, Asn-27, Asn-36, and Asn-42 each carry an N-linked (GlcNAc...) asparagine glycan. The chain crosses the membrane as a helical span at residues Val-66–Leu-88. Residues Glu-89 to Asn-98 lie on the Cytoplasmic side of the membrane. The chain crosses the membrane as a helical span at residues Leu-99 to Val-120. Residues Tyr-121 to Asp-135 lie on the Extracellular side of the membrane. Cysteines 134 and 214 form a disulfide. A helical membrane pass occupies residues Met-136–Leu-157. The Cytoplasmic portion of the chain corresponds to Asp-158 to Arg-176. Residues Val-177–Trp-199 traverse the membrane as a helical segment. Topologically, residues Lys-200 to Thr-227 are extracellular. The helical transmembrane segment at Ala-228–Ala-249 threads the bilayer. At Arg-250–Thr-367 the chain is on the cytoplasmic side. Over residues Thr-304 to Ala-324 the composition is skewed to polar residues. Positions Thr-304–Ala-329 are disordered. A helical transmembrane segment spans residues Leu-368 to Thr-391. The Extracellular portion of the chain corresponds to Cys-392 to Val-399. The helical transmembrane segment at Leu-400 to Phe-422 threads the bilayer. Residues Ser-423–Gln-446 are Cytoplasmic-facing.

This sequence belongs to the G-protein coupled receptor 1 family.

The protein resides in the cell membrane. Its function is as follows. This is a receptor for 5-hydroxytryptamine (serotonin), a biogenic hormone that function as a neurotransmitter, a hormone, and a mitogen. The protein is 5-hydroxytryptamine receptor of Bombyx mori (Silk moth).